A 437-amino-acid chain; its full sequence is UDP-glucosyl transferase 79L3 (437 aa).

The active-site Proton acceptor is the histidine 18. Aspartate 117 serves as the catalytic Charge relay. Residues serine 254, tryptophan 312, valine 313, histidine 330, serine 335, and glutamate 338 each contribute to the UDP site.

This sequence belongs to the UDP-glycosyltransferase family. In terms of tissue distribution, mainly expressed in flowers, flower buds and young leaves, and, to a lesser extent, in old leaves, stems and roots.

It functions in the pathway secondary metabolite biosynthesis; terpenoid biosynthesis. In terms of biological role, component of the oleanane-type triterpene saponins (e.g. saponarioside A and saponarioside B) biosynthetic pathway, leading to the production of natural products with detergent properties used as traditional sources of soap. A glycosyltransferase that mediates the conversion of QA-triFR to QA-triFRX via the elongation of the C-28 sugar chain with a D-xylose. This chain is UDP-glucosyl transferase 79L3, found in Saponaria officinalis (Common soapwort).